The sequence spans 427 residues: Enolase (427 aa).

Gln-163 contacts (2R)-2-phosphoglycerate. The Proton donor role is filled by Glu-205. Mg(2+)-binding residues include Asp-242, Glu-285, and Asp-312. (2R)-2-phosphoglycerate contacts are provided by Lys-337, Arg-366, Ser-367, and Lys-388. Residue Lys-337 is the Proton acceptor of the active site.

Belongs to the enolase family. Requires Mg(2+) as cofactor.

The protein resides in the cytoplasm. It localises to the secreted. The protein localises to the cell surface. The catalysed reaction is (2R)-2-phosphoglycerate = phosphoenolpyruvate + H2O. The protein operates within carbohydrate degradation; glycolysis; pyruvate from D-glyceraldehyde 3-phosphate: step 4/5. Catalyzes the reversible conversion of 2-phosphoglycerate (2-PG) into phosphoenolpyruvate (PEP). It is essential for the degradation of carbohydrates via glycolysis. In Bradyrhizobium diazoefficiens (strain JCM 10833 / BCRC 13528 / IAM 13628 / NBRC 14792 / USDA 110), this protein is Enolase.